The following is a 468-amino-acid chain: Ribulose bisphosphate carboxylase large chain (468 aa).

The residue at position 7 (Lys-7) is an N6,N6,N6-trimethyllysine. The substrate site is built by Asn-116 and Thr-166. Lys-168 (proton acceptor) is an active-site residue. Lys-170 contributes to the substrate binding site. The Mg(2+) site is built by Lys-194, Asp-196, and Glu-197. Lys-194 is subject to N6-carboxylysine. The active-site Proton acceptor is the His-287. Substrate contacts are provided by Arg-288, His-320, and Ser-372.

It belongs to the RuBisCO large chain family. Type I subfamily. Heterohexadecamer of 8 large chains and 8 small chains. Requires Mg(2+) as cofactor.

It localises to the plastid. Its subcellular location is the chloroplast. The enzyme catalyses 2 (2R)-3-phosphoglycerate + 2 H(+) = D-ribulose 1,5-bisphosphate + CO2 + H2O. The catalysed reaction is D-ribulose 1,5-bisphosphate + O2 = 2-phosphoglycolate + (2R)-3-phosphoglycerate + 2 H(+). RuBisCO catalyzes two reactions: the carboxylation of D-ribulose 1,5-bisphosphate, the primary event in carbon dioxide fixation, as well as the oxidative fragmentation of the pentose substrate in the photorespiration process. Both reactions occur simultaneously and in competition at the same active site. In Couroupita guianensis (Cannonball tree), this protein is Ribulose bisphosphate carboxylase large chain.